Reading from the N-terminus, the 401-residue chain is Chalcone synthase 2 (401 aa).

Residue Cys168 is part of the active site.

It belongs to the thiolase-like superfamily. Chalcone/stilbene synthases family.

The catalysed reaction is (E)-4-coumaroyl-CoA + 3 malonyl-CoA + 3 H(+) = 2',4,4',6'-tetrahydroxychalcone + 3 CO2 + 4 CoA. The protein operates within secondary metabolite biosynthesis; flavonoid biosynthesis. Its function is as follows. The primary product of this enzyme is 4,2',4',6'-tetrahydroxychalcone (also termed naringenin-chalcone or chalcone) which can under specific conditions spontaneously isomerize into naringenin. The sequence is that of Chalcone synthase 2 (CHS2) from Sorghum bicolor (Sorghum).